The primary structure comprises 118 residues: Large ribosomal subunit protein bL20c (118 aa).

This sequence belongs to the bacterial ribosomal protein bL20 family.

The protein localises to the plastid. It localises to the chloroplast. In terms of biological role, binds directly to 23S ribosomal RNA and is necessary for the in vitro assembly process of the 50S ribosomal subunit. It is not involved in the protein synthesizing functions of that subunit. The chain is Large ribosomal subunit protein bL20c from Adiantum capillus-veneris (Maidenhair fern).